The chain runs to 496 residues: MLO-like protein 15 (496 aa).

Over 1–9 (MAGGGTTLE) the chain is Extracellular. The chain crosses the membrane as a helical span at residues 10–30 (YTPTWVVALVCSVIVSISFAV). Residues 31-59 (ERLIHRAGKHFKNNDQKQLFGALQKIKEE) lie on the Cytoplasmic side of the membrane. Residues 60-80 (LMLVGFISLLLSVGQSKIAKI) traverse the membrane as a helical segment. Residues 81–147 (CISKELSEKF…MSLSALHELH (67 aa)) are Extracellular-facing. A helical transmembrane segment spans residues 148–168 (IFIFVLAVAHIIFCLLTIVFG). Residues 169–269 (TMKIKQWKKW…KYLMRALNSD (101 aa)) are Cytoplasmic-facing. A helical membrane pass occupies residues 270–290 (FKKVVGISWYLWVFVVLFLLL). A topological domain (extracellular) is located at residue Asn291. A helical membrane pass occupies residues 292–312 (IVAWHVYFWLAFIPLILLLAV). The Cytoplasmic portion of the chain corresponds to 313-355 (GTKLEHIITDLAHEVAEKHIAVEGDLVVRPSDDLFWFQSPRLV). The helical transmembrane segment at 356–376 (LFLIHFILFQNSFEIAYFFFI) threads the bilayer. The Extracellular portion of the chain corresponds to 377–397 (LFQFGWDSCIMDHVKFVIPRL). The helical transmembrane segment at 398–418 (VIGVIIQLLCSYSTLPLYALV) threads the bilayer. Topologically, residues 419 to 496 (TQMGSSFKGA…KEKSEIAHHD (78 aa)) are cytoplasmic. The calmodulin-binding stretch occupies residues 432–453 (EQTQEHLVGWAKMAKRGVKKGA). A disordered region spans residues 454–496 (TQVGTSHDATSPRPSIQLNSLLGKGSSQQNQNPKEKSEIAHHD). Over residues 455–485 (QVGTSHDATSPRPSIQLNSLLGKGSSQQNQN) the composition is skewed to polar residues. The span at 486–496 (PKEKSEIAHHD) shows a compositional bias: basic and acidic residues.

The protein belongs to the MLO family.

It localises to the membrane. May be involved in modulation of pathogen defense and leaf cell death. Activity seems to be regulated by Ca(2+)-dependent calmodulin binding and seems not to require heterotrimeric G proteins. The protein is MLO-like protein 15 (MLO15) of Arabidopsis thaliana (Mouse-ear cress).